Consider the following 467-residue polypeptide: Heat shock factor protein 3 (467 aa).

Residues 16–121 mediate DNA binding; it reads VPGFLAKLWA…LLENIKRKVS (106 aa). The interval 128 to 201 is hydrophobic repeat HR-A/B; sequence LKVCAEDLHK…LSLMRGNYIV (74 aa). Residues 364-389 form a hydrophobic repeat HR-C region; sequence IQDFLNCIDASLEELQAMLSGKQYSF. Residues 427–449 form a disordered region; the sequence is EDLGASERETAGSKGGQEGTESC.

This sequence belongs to the HSF family. In terms of assembly, homotrimer. As to expression, expressed in most tissues. High levels are found in erythrocytes and low levels in liver.

It is found in the cytoplasm. The protein localises to the nucleus. DNA-binding protein that specifically binds heat shock promoter elements (HSE) and activates transcription. HSF3 binds DNA constitutively only when the C-terminal region is deleted. This chain is Heat shock factor protein 3 (HSF3), found in Gallus gallus (Chicken).